The primary structure comprises 680 residues: PAN2-PAN3 deadenylation complex subunit PAN3 (680 aa).

Disordered stretches follow at residues 1-26 (MATT…RADT), 51-87 (HDQT…SKKT), and 99-120 (FTPR…TDIP). The C3H1-type zinc-finger motif lies at 25–54 (DTKDTLCRNILIYGHCRYEDAGCAFNHDQT). Basic and acidic residues predominate over residues 52-64 (DQTKKSPKPDATT). A PABPC-interacting motif-2 (PAM-2) motif is present at residues 62 to 82 (ATTRKTLNVDSAPFTPAVSSQ). The segment covering 99–117 (FTPRATAATPTGTPTAQET) has biased composition (low complexity). The pseudokinase domain stretch occupies residues 256 to 522 (QTMTGTAALQ…TVKNLVAGIN (267 aa)). Residues Arg311, 360 to 367 (EYYPLAET), and 422 to 423 (TK) contribute to the ATP site. Positions 523 to 561 (EHVMTAFDAQQRQSDMLYSELYREVENGRVLRLLMKLAT) form a coiled coil. Residues 562-680 (INERTEYDKD…VHHPSHRDRF (119 aa)) form a knob domain region. Over residues 655 to 669 (SGNGRGGPVASGSGH) the composition is skewed to gly residues. A disordered region spans residues 655-680 (SGNGRGGPVASGSGHGVHHPSHRDRF). The segment covering 670 to 680 (GVHHPSHRDRF) has biased composition (basic residues).

This sequence belongs to the protein kinase superfamily. PAN3 family. In terms of assembly, homodimer. Forms a heterotrimer with a catalytic subunit PAN2 to form the poly(A)-nuclease (PAN) deadenylation complex. Interacts (via PAM-2 motif) with poly(A)-binding protein PAB1 (via PABC domain), conferring substrate specificity of the enzyme complex.

The protein localises to the cytoplasm. In terms of biological role, regulatory subunit of the poly(A)-nuclease (PAN) deadenylation complex, one of two cytoplasmic mRNA deadenylases involved in mRNA turnover. PAN specifically shortens poly(A) tails of RNA and the activity is stimulated by poly(A)-binding protein PAB1. PAN deadenylation is followed by rapid degradation of the shortened mRNA tails by the CCR4-NOT complex. Deadenylated mRNAs are then degraded by two alternative mechanisms, namely exosome-mediated 3'-5' exonucleolytic degradation, or deadenylation-dependent mRNA decaping and subsequent 5'-3' exonucleolytic degradation by XRN1. May also be involved in post-transcriptional maturation of mRNA poly(A) tails. PAN3 acts as a positive regulator for PAN activity, recruiting the catalytic subunit PAN2 to mRNA via its interaction with RNA and with PAB1. This chain is PAN2-PAN3 deadenylation complex subunit PAN3, found in Pyricularia oryzae (strain 70-15 / ATCC MYA-4617 / FGSC 8958) (Rice blast fungus).